A 360-amino-acid polypeptide reads, in one-letter code: Protein Wnt-2 (360 aa).

The signal sequence occupies residues 1-25 (MNSPLRGIWLWLPLLLTWLTPEVSS). Disulfide bonds link Cys-76–Cys-87, Cys-127–Cys-135, Cys-137–Cys-157, Cys-206–Cys-220, Cys-208–Cys-215, Cys-278–Cys-309, Cys-294–Cys-304, Cys-308–Cys-348, Cys-324–Cys-339, Cys-326–Cys-336, and Cys-331–Cys-332. A lipid anchor (O-palmitoleoyl serine; by PORCN) is attached at Ser-212. A glycan (N-linked (GlcNAc...) asparagine) is linked at Asn-295.

Belongs to the Wnt family. Post-translationally, palmitoleoylation is required for efficient binding to frizzled receptors. Depalmitoleoylation leads to Wnt signaling pathway inhibition.

The protein localises to the secreted. It is found in the extracellular space. Its subcellular location is the extracellular matrix. Its function is as follows. Ligand for members of the frizzled family of seven transmembrane receptors. Functions in the canonical Wnt signaling pathway that results in activation of transcription factors of the TCF/LEF family. Functions as a upstream regulator of FGF10 expression. Plays an important role in embryonic lung development. May contribute to embryonic brain development by regulating the proliferation of dopaminergic precursors and neurons. This is Protein Wnt-2 (WNT2) from Callithrix jacchus (White-tufted-ear marmoset).